The following is a 626-amino-acid chain: Myelin-associated glycoprotein (626 aa).

The N-terminal stretch at 1–19 (MIFLTALPLFWIMISASRG) is a signal peptide. Residues 20–325 (GHWGAWMPSS…RTVGLSVMYA (306 aa)) form an interaction with RTN4R and RTN4RL2 region. Residues 20–516 (GHWGAWMPSS…HRLMWAKIGP (497 aa)) lie on the Extracellular side of the membrane. One can recognise an Ig-like V-type domain in the interval 22–120 (WGAWMPSSIS…LGGKYYFRGD (99 aa)). 3 cysteine pairs are disulfide-bonded: Cys-37-Cys-165, Cys-42-Cys-100, and Cys-159-Cys-217. Residue 65–67 (YPK) participates in a ganglioside GT1b (d18:1(4E)) binding. The N-linked (GlcNAc...) asparagine glycan is linked to Asn-99. An N-linked (GlcNAc...) asparagine; partial glycan is attached at Asn-106. Residues Arg-118 and 124-128 (YNQYT) contribute to the a ganglioside GT1b (d18:1(4E)) site. Ig-like C2-type domains lie at 139–237 (NTPN…MDVK), 241–325 (VIVE…VMYA), 327–412 (WKPT…VEFA), and 413–508 (PVLL…GAHR). N-linked (GlcNAc...) asparagine glycosylation is found at Asn-223 and Asn-246. Cys-261 and Cys-305 are oxidised to a cystine. Asn-315 is a glycosylation site (N-linked (GlcNAc...) asparagine). A disulfide bond links Cys-347 and Cys-392. An N-linked (GlcNAc...) asparagine glycan is attached at Asn-406. Intrachain disulfides connect Cys-421/Cys-430 and Cys-432/Cys-488. Residues Asn-450 and Asn-454 are each glycosylated (N-linked (GlcNAc...) asparagine). The helical transmembrane segment at 517–536 (VGAVVAFAILIAIVCYITQT) threads the bilayer. Cys-531 carries the S-palmitoyl cysteine lipid modification. At 537–626 (RRKKNVTESP…LAEYAEIRVK (90 aa)) the chain is on the cytoplasmic side. A phosphoserine mark is found at Ser-545, Ser-547, and Ser-549. Residues 577-626 (LGSERRLLGLRGEPPELDLSYSHSDLGKRPTKDSYTLTEELAEYAEIRVK) form a required for normal axon myelination in the central nervous system region. The segment at 582-608 (RLLGLRGEPPELDLSYSHSDLGKRPTK) is disordered.

It belongs to the immunoglobulin superfamily. SIGLEC (sialic acid binding Ig-like lectin) family. As to quaternary structure, monomer and homodimer. Interacts (via the first three N-terminal Ig-like domains) with RTN4R and RTN4RL2. Interacts with RTN4R. Interacts with isoform 2 of BSG. Post-translationally, N-glycosylated. In terms of processing, phosphorylated on tyrosine residues. Ubiquitinated, leading to proteasomal degradation. As to expression, both isoform 1 and isoform 2 are detected in myelinated structures in the central and peripheral nervous system, in periaxonal myelin and at Schmidt-Lanterman incisures. Detected in optic nerve, in oligodendroglia and in periaxonal myelin sheaths. Detected in compact myelin (at protein level). Both isoform 1 and isoform 2 are detected in the central and peripheral nervous system.

The protein localises to the cell membrane. It localises to the membrane raft. Adhesion molecule that mediates interactions between myelinating cells and neurons by binding to neuronal sialic acid-containing gangliosides and to the glycoproteins RTN4R and RTN4RL2. Not required for initial myelination, but seems to play a role in the maintenance of normal axon myelination. Protects motoneurons against apoptosis, also after injury; protection against apoptosis is probably mediated via interaction with neuronal RTN4R and RTN4RL2. Required to prevent degeneration of myelinated axons in adults; this probably depends on binding to gangliosides on the axon cell membrane. Negative regulator of neurite outgrowth; in dorsal root ganglion neurons the inhibition is mediated primarily via binding to neuronal RTN4R or RTN4RL2 and to a lesser degree via binding to neuronal gangliosides. In cerebellar granule cells the inhibition is mediated primarily via binding to neuronal gangliosides. In sensory neurons, inhibition of neurite extension depends only partially on RTN4R, RTN4RL2 and gangliosides. Inhibits axon longitudinal growth. Inhibits axon outgrowth by binding to RTN4R. Preferentially binds to alpha-2,3-linked sialic acid. Binds ganglioside Gt1b. This is Myelin-associated glycoprotein (MAG) from Homo sapiens (Human).